Here is a 508-residue protein sequence, read N- to C-terminus: Abl interactor 1 (508 aa).

A2 bears the N-acetylalanine mark. The interval 18–79 (ALIESYQNLT…NNVLQLLDIQ (62 aa)) is required for binding to WASF1. In terms of domain architecture, t-SNARE coiled-coil homology spans 45–107 (KALEETKAYT…DIHKEKVARR (63 aa)). Y53 is modified (phosphotyrosine). Disordered stretches follow at residues 159-290 (KHGN…APPL), 306-375 (APGS…LTPQ), and 388-421 (NIAD…PVDY). The span at 161–175 (GNNQPARTGTLSRTN) shows a compositional bias: polar residues. Phosphothreonine occurs at positions 174 and 178. Phosphoserine is present on residues S183 and S187. The residue at position 213 (Y213) is a Phosphotyrosine; by ABL1. At T215 the chain carries Phosphothreonine. S216, S222, and S225 each carry phosphoserine. The span at 222-235 (SQHSPGRTASLNQR) shows a compositional bias: polar residues. Over residues 248–258 (SRENSGSSSIG) the composition is skewed to low complexity. Pro residues predominate over residues 278–290 (VPPPSGAPPAPPL). The span at 307–322 (PGSQYGTMTRQISRHN) shows a compositional bias: polar residues. 2 positions are modified to phosphoserine: S319 and S323. A compositionally biased stretch (polar residues) spans 337-347 (PSVTAQFSAQP). 2 stretches are compositionally biased toward pro residues: residues 393–403 (PTPPPPPPPDD) and 410–419 (SPPPPPPPPV). Residues 446–505 (NYIEKVVAIYDYTKDKDDELSFMEGAIIYVIKKNDDGWYEGVCNRVTGLFPGNYVESIMH) enclose the SH3 domain. At Y455 the chain carries Phosphotyrosine. S466 is subject to Phosphoserine. T507 is subject to Phosphothreonine.

It belongs to the ABI family. Interacts with ABL1, ENAH, STX1A, SNAP25, VAMP2, EPS8, and through its N-terminus with WASF1. Part of a complex consisting of ABI1, STX1A and SNAP25. Part of a complex consisting of ABI1, EPS8 and SOS1. Interacts with SOS1, SOS2, GRB2, SPTA1 and the first SH3 domain of NCK1. Isoform 6 does not interact with NCK1. Component of the WAVE2 complex composed of ABI1, CYFIP1/SRA1, NCKAP1/NAP1 (NCKAP1l/HEM1 in hematopoietic cells) and WASF2/WAVE2. Interacts (via SH3 domain) with SHANK2 and SHANK3, but not SHANK1; the interaction is direct. Interacts with the heterodimer MYC:MAX; the interaction may enhance MYC:MAX transcriptional activity. Interacts with FNBP1L (via the SH3 domain), WASF2, and CDC42, but only in the presence of FNBP1L. As to quaternary structure, (Microbial infection) Interacts with human cytomegalovirus/HHV-5 protein UL135. Phosphorylated on tyrosine residues after serum stimulation or induction by v-Abl. Seems to be phosphorylated at Tyr-53 by ABL1, required for nuclear but not for synaptic localization. As to expression, widely expressed, with highest expression in brain.

It localises to the cytoplasm. It is found in the nucleus. Its subcellular location is the cell projection. The protein resides in the lamellipodium. The protein localises to the filopodium. It localises to the growth cone. It is found in the postsynaptic density. Its subcellular location is the cytoskeleton. In terms of biological role, may act in negative regulation of cell growth and transformation by interacting with nonreceptor tyrosine kinases ABL1 and/or ABL2. May play a role in regulation of EGF-induced Erk pathway activation. Involved in cytoskeletal reorganization and EGFR signaling. Together with EPS8 participates in transduction of signals from Ras to Rac. In vitro, a trimeric complex of ABI1, EPS8 and SOS1 exhibits Rac specific guanine nucleotide exchange factor (GEF) activity and ABI1 seems to act as an adapter in the complex. Regulates ABL1/c-Abl-mediated phosphorylation of ENAH. Recruits WASF1 to lamellipodia and there seems to regulate WASF1 protein level. In brain, seems to regulate the dendritic outgrowth and branching as well as to determine the shape and number of synaptic contacts of developing neurons. In Homo sapiens (Human), this protein is Abl interactor 1.